We begin with the raw amino-acid sequence, 453 residues long: Growth/differentiation factor 9 (453 aa).

The N-terminal stretch at 1–27 is a signal peptide; the sequence is MALPNKFFLWFCCFAWLCFPISLDSLP. Positions 28–318 are excised as a propeptide; the sequence is SRGEAQIVAR…EGVRSSRHRR (291 aa). N-linked (GlcNAc...) asparagine glycosylation is found at Asn163, Asn236, Asn255, and Asn269. Positions 304-328 are disordered; that stretch reads GEEAAEGVRSSRHRRDQESASSELK. The segment covering 318 to 328 has biased composition (basic and acidic residues); sequence RDQESASSELK. A glycan (N-linked (GlcNAc...) asparagine) is linked at Asn337. Cystine bridges form between Cys352–Cys418, Cys381–Cys450, and Cys385–Cys452.

This sequence belongs to the TGF-beta family. As to quaternary structure, homodimer or heterodimer (Potential). But, in contrast to other members of this family, cannot be disulfide-linked. In terms of processing, phosphorylated; phosphorylation is critical for GDF9 function.

It is found in the secreted. Required for ovarian folliculogenesis. In Ovis aries (Sheep), this protein is Growth/differentiation factor 9 (GDF9).